The chain runs to 188 residues: METPPTPTTTTPPSLTTEGTMDDIQYLLHLEAMRRFQEDSRNVKRQVEEQVRIWLDAKCEYQRDFGRLARLLKCGALQAAVDAHRVSDVNQVDQAAKDIASLRSKLGSDLRPAILDSNDVKQCLEHLNTTHKPRLNLCRQQREFAQNQEALRSLRTAVDGLENGMEMGMIQAMDRLVEDLLPPRETNN.

Residues Gln-141–Asn-163 are a coiled coil.

In terms of assembly, component of the augmin complex composed of dgt2, dgt3, dgt4, dgt5, dgt6, msd1, msd5 and wac. The complex interacts directly or indirectly with microtubules and is required for centrosome-independent generation of spindle microtubules.

The protein localises to the cytoplasm. Its subcellular location is the cytoskeleton. It is found in the spindle. In terms of biological role, as part of the augmin complex, plays a role in centrosome-independent generation of spindle microtubules. The complex is required for mitotic spindle assembly through its involvement in localizing gamma-tubulin to spindle microtubules. In Drosophila melanogaster (Fruit fly), this protein is Augmin complex subunit dgt4.